The chain runs to 204 residues: MADPRVEELPDEEVPKTNVEDAGSDSESEAGEESSIPSGAAVTIHSRNEKKARKAIGKLGLKHVPGITRVTLRRPKNILFVINQPDVYRSPTSNTWIIFGEAKIEDLNSQAQASAAQQLAAAEAAAGEHAGHDHDHDHGKGKAPETEAKKEEEEDDGEEVDETGLEAKDIELVMAQANVSRKKAVKALRENDNDIVNSIMALSI.

Residues 1-19 (MADPRVEELPDEEVPKTNV) are compositionally biased toward basic and acidic residues. Disordered regions lie at residues 1-48 (MADP…HSRN) and 119-167 (LAAA…GLEA). Residues 22–32 (AGSDSESEAGE) show a composition bias toward acidic residues. An NAC-A/B domain is found at 46–111 (SRNEKKARKA…AKIEDLNSQA (66 aa)). Over residues 119–128 (LAAAEAAAGE) the composition is skewed to low complexity. Basic and acidic residues predominate over residues 129 to 151 (HAGHDHDHDHGKGKAPETEAKKE). The segment covering 152–164 (EEEDDGEEVDETG) has biased composition (acidic residues). Residues 165-204 (LEAKDIELVMAQANVSRKKAVKALRENDNDIVNSIMALSI) form the UBA domain.

It belongs to the NAC-alpha family. As to quaternary structure, part of the nascent polypeptide-associated complex (NAC), consisting of egd2 and egd1. NAC associates with ribosomes via egd1.

The protein resides in the cytoplasm. The protein localises to the nucleus. Component of the nascent polypeptide-associated complex (NAC), a dynamic component of the ribosomal exit tunnel, protecting the emerging polypeptides from interaction with other cytoplasmic proteins to ensure appropriate nascent protein targeting. The NAC complex also promotes mitochondrial protein import by enhancing productive ribosome interactions with the outer mitochondrial membrane and blocks the inappropriate interaction of ribosomes translating non-secretory nascent polypeptides with translocation sites in the membrane of the endoplasmic reticulum. Egd2 may also be involved in transcription regulation. This is Nascent polypeptide-associated complex subunit alpha (egd2) from Aspergillus clavatus (strain ATCC 1007 / CBS 513.65 / DSM 816 / NCTC 3887 / NRRL 1 / QM 1276 / 107).